We begin with the raw amino-acid sequence, 253 residues long: Glucosamine-6-phosphate deaminase (253 aa).

The active-site Proton acceptor; for enolization step is aspartate 67. Asparagine 136 acts as the For ring-opening step in catalysis. The active-site Proton acceptor; for ring-opening step is the histidine 138. Residue glutamate 143 is the For ring-opening step of the active site.

This sequence belongs to the glucosamine/galactosamine-6-phosphate isomerase family. NagB subfamily.

It carries out the reaction alpha-D-glucosamine 6-phosphate + H2O = beta-D-fructose 6-phosphate + NH4(+). Its pathway is amino-sugar metabolism; N-acetylneuraminate degradation; D-fructose 6-phosphate from N-acetylneuraminate: step 5/5. Functionally, catalyzes the reversible isomerization-deamination of glucosamine 6-phosphate (GlcN6P) to form fructose 6-phosphate (Fru6P) and ammonium ion. This is Glucosamine-6-phosphate deaminase from Thermoanaerobacter sp. (strain X514).